The chain runs to 596 residues: Merlin (596 aa).

At Ser-13 the chain carries Phosphoserine. In terms of domain architecture, FERM spans 22 to 311 (FTVRIVTMDA…GNHDLFMRRR (290 aa)). Ser-518 bears the Phosphoserine; by PAK mark. The segment at 560–580 (VLHSESSDRGGPSSKHNTIKK) is disordered.

In terms of assembly, interacts with NHERF1, HGS and AGAP2. Interacts with SGSM3. Interacts (via FERM domain) with MPP1. Interacts with LAYN. Interacts with WWC1. Interacts with the CUL4A-RBX1-DDB1-VprBP/DCAF1 E3 ubiquitin-protein ligase complex. The unphosphorylated form interacts (via FERM domain) with VPRBP/DCAF1. Interacts (via FERM domain) with NOP53; the interaction is direct. Interacts with SCHIP1; the interaction is direct. Post-translationally, phosphorylation of Ser-518 inhibits nuclear localization by disrupting the intramolecular association of the FERM domain with the C-terminal tail. The dephosphorylation of Ser-518 favors the interaction with NOP53. In terms of processing, ubiquitinated by the CUL4A-RBX1-DDB1-DCAF1/VprBP E3 ubiquitin-protein ligase complex for ubiquitination and subsequent proteasome-dependent degradation.

The protein resides in the cell membrane. It localises to the cell projection. It is found in the cytoplasm. Its subcellular location is the cytoskeleton. The protein localises to the nucleus. Functionally, probable regulator of the Hippo/SWH (Sav/Wts/Hpo) signaling pathway, a signaling pathway that plays a pivotal role in tumor suppression by restricting proliferation and promoting apoptosis. Along with WWC1 can synergistically induce the phosphorylation of LATS1 and LATS2 and can probably function in the regulation of the Hippo/SWH (Sav/Wts/Hpo) signaling pathway. May act as a membrane stabilizing protein. May inhibit PI3 kinase by binding to AGAP2 and impairing its stimulating activity. Suppresses cell proliferation and tumorigenesis by inhibiting the CUL4A-RBX1-DDB1-VprBP/DCAF1 E3 ubiquitin-protein ligase complex. Plays a role in lens development and is required for complete fiber cell terminal differentiation, maintenance of cell polarity and separation of the lens vesicle from the corneal epithelium. In Mus musculus (Mouse), this protein is Merlin (Nf2).